Consider the following 457-residue polypeptide: DNA repair protein RadA (457 aa).

The C4-type zinc finger occupies 10–27 (CQECGYESAKWMGKCPGC). Residue 97 to 104 (GDPGIGKS) participates in ATP binding. Positions 254–258 (KNRFG) match the RadA KNRFG motif motif. A lon-protease-like region spans residues 353–457 (DAYVNVAGGV…QDALEVTLGR (105 aa)).

Belongs to the RecA family. RadA subfamily.

In terms of biological role, DNA-dependent ATPase involved in processing of recombination intermediates, plays a role in repairing DNA breaks. Stimulates the branch migration of RecA-mediated strand transfer reactions, allowing the 3' invading strand to extend heteroduplex DNA faster. Binds ssDNA in the presence of ADP but not other nucleotides, has ATPase activity that is stimulated by ssDNA and various branched DNA structures, but inhibited by SSB. Does not have RecA's homology-searching function. The protein is DNA repair protein RadA of Halalkalibacterium halodurans (strain ATCC BAA-125 / DSM 18197 / FERM 7344 / JCM 9153 / C-125) (Bacillus halodurans).